Reading from the N-terminus, the 428-residue chain is Histidinol dehydrogenase (428 aa).

Positions 126, 188, and 211 each coordinate NAD(+). Substrate is bound by residues S234, Q256, and H259. Zn(2+) is bound by residues Q256 and H259. Residues E324 and H325 each act as proton acceptor in the active site. Substrate contacts are provided by H325, D358, E412, and H417. Residue D358 coordinates Zn(2+). H417 lines the Zn(2+) pocket.

It belongs to the histidinol dehydrogenase family. Zn(2+) serves as cofactor.

The enzyme catalyses L-histidinol + 2 NAD(+) + H2O = L-histidine + 2 NADH + 3 H(+). It participates in amino-acid biosynthesis; L-histidine biosynthesis; L-histidine from 5-phospho-alpha-D-ribose 1-diphosphate: step 9/9. In terms of biological role, catalyzes the sequential NAD-dependent oxidations of L-histidinol to L-histidinaldehyde and then to L-histidine. The sequence is that of Histidinol dehydrogenase from Chlorobium chlorochromatii (strain CaD3).